Here is a 484-residue protein sequence, read N- to C-terminus: Glutamyl-tRNA(Gln) amidotransferase subunit A (484 aa).

Catalysis depends on charge relay system residues K77 and S152. S176 serves as the catalytic Acyl-ester intermediate.

Belongs to the amidase family. GatA subfamily. In terms of assembly, heterotrimer of A, B and C subunits.

It carries out the reaction L-glutamyl-tRNA(Gln) + L-glutamine + ATP + H2O = L-glutaminyl-tRNA(Gln) + L-glutamate + ADP + phosphate + H(+). In terms of biological role, allows the formation of correctly charged Gln-tRNA(Gln) through the transamidation of misacylated Glu-tRNA(Gln) in organisms which lack glutaminyl-tRNA synthetase. The reaction takes place in the presence of glutamine and ATP through an activated gamma-phospho-Glu-tRNA(Gln). The polypeptide is Glutamyl-tRNA(Gln) amidotransferase subunit A (Pseudomonas aeruginosa (strain LESB58)).